A 297-amino-acid polypeptide reads, in one-letter code: D-alanine--D-alanine ligase (297 aa).

The region spanning 103-293 (KEILMHHRMP…FDSFVKSILE (191 aa)) is the ATP-grasp domain. 129-180 (ISFPVAVKPSSGGSSIATFKVKSLEELENAYQQASKHGEVMIEQWVTGKEIT) contacts ATP. Positions 247, 260, and 262 each coordinate Mg(2+).

This sequence belongs to the D-alanine--D-alanine ligase family. Mg(2+) is required as a cofactor. Mn(2+) serves as cofactor.

The protein localises to the cytoplasm. It catalyses the reaction 2 D-alanine + ATP = D-alanyl-D-alanine + ADP + phosphate + H(+). Its pathway is cell wall biogenesis; peptidoglycan biosynthesis. Its function is as follows. Cell wall formation. The chain is D-alanine--D-alanine ligase from Francisella philomiragia subsp. philomiragia (strain ATCC 25017 / CCUG 19701 / FSC 153 / O#319-036).